A 320-amino-acid polypeptide reads, in one-letter code: Chorion protein S36 (320 aa).

The signal sequence occupies residues 1–18; sequence MNCFLFTLFFVAAPLATA. 5 repeat units span residues 178–181, 258–261, 266–269, 274–277, and A290. The interval 259-320 is disordered; the sequence is APAQSYNAAP…YGSAPPASGY (62 aa).

This sequence belongs to the chorion protein S36 family.

The protein resides in the secreted. In terms of biological role, chorion membrane (egg shell) protein; plays a role in protecting the egg from the environment. This chain is Chorion protein S36 (Cp36), found in Ceratitis capitata (Mediterranean fruit fly).